Here is a 283-residue protein sequence, read N- to C-terminus: Bifunctional protein FolD (283 aa).

Residues 164–166 (GRS), S189, and T230 contribute to the NADP(+) site.

It belongs to the tetrahydrofolate dehydrogenase/cyclohydrolase family. As to quaternary structure, homodimer.

The catalysed reaction is (6R)-5,10-methylene-5,6,7,8-tetrahydrofolate + NADP(+) = (6R)-5,10-methenyltetrahydrofolate + NADPH. It carries out the reaction (6R)-5,10-methenyltetrahydrofolate + H2O = (6R)-10-formyltetrahydrofolate + H(+). Its pathway is one-carbon metabolism; tetrahydrofolate interconversion. In terms of biological role, catalyzes the oxidation of 5,10-methylenetetrahydrofolate to 5,10-methenyltetrahydrofolate and then the hydrolysis of 5,10-methenyltetrahydrofolate to 10-formyltetrahydrofolate. The protein is Bifunctional protein FolD of Dictyoglomus thermophilum (strain ATCC 35947 / DSM 3960 / H-6-12).